We begin with the raw amino-acid sequence, 243 residues long: 1-(5-phosphoribosyl)-5-[(5-phosphoribosylamino)methylideneamino] imidazole-4-carboxamide isomerase (243 aa).

Catalysis depends on Asp8, which acts as the Proton acceptor. Catalysis depends on Asp129, which acts as the Proton donor.

The protein belongs to the HisA/HisF family.

Its subcellular location is the cytoplasm. It carries out the reaction 1-(5-phospho-beta-D-ribosyl)-5-[(5-phospho-beta-D-ribosylamino)methylideneamino]imidazole-4-carboxamide = 5-[(5-phospho-1-deoxy-D-ribulos-1-ylimino)methylamino]-1-(5-phospho-beta-D-ribosyl)imidazole-4-carboxamide. The protein operates within amino-acid biosynthesis; L-histidine biosynthesis; L-histidine from 5-phospho-alpha-D-ribose 1-diphosphate: step 4/9. This is 1-(5-phosphoribosyl)-5-[(5-phosphoribosylamino)methylideneamino] imidazole-4-carboxamide isomerase from Citrifermentans bemidjiense (strain ATCC BAA-1014 / DSM 16622 / JCM 12645 / Bem) (Geobacter bemidjiensis).